Consider the following 315-residue polypeptide: Acetyl-coenzyme A carboxylase carboxyl transferase subunit alpha (315 aa).

The CoA carboxyltransferase C-terminal domain occupies 40–293 (LQDKSKTLTE…REELSSQLAM (254 aa)).

Belongs to the AccA family. In terms of assembly, acetyl-CoA carboxylase is a heterohexamer composed of biotin carboxyl carrier protein (AccB), biotin carboxylase (AccC) and two subunits each of ACCase subunit alpha (AccA) and ACCase subunit beta (AccD).

The protein resides in the cytoplasm. The enzyme catalyses N(6)-carboxybiotinyl-L-lysyl-[protein] + acetyl-CoA = N(6)-biotinyl-L-lysyl-[protein] + malonyl-CoA. It functions in the pathway lipid metabolism; malonyl-CoA biosynthesis; malonyl-CoA from acetyl-CoA: step 1/1. Its function is as follows. Component of the acetyl coenzyme A carboxylase (ACC) complex. First, biotin carboxylase catalyzes the carboxylation of biotin on its carrier protein (BCCP) and then the CO(2) group is transferred by the carboxyltransferase to acetyl-CoA to form malonyl-CoA. The protein is Acetyl-coenzyme A carboxylase carboxyl transferase subunit alpha of Pseudomonas syringae pv. tomato (strain ATCC BAA-871 / DC3000).